Reading from the N-terminus, the 374-residue chain is DNA replication and repair protein RecF (374 aa).

30–37 contributes to the ATP binding site; that stretch reads GPNAQGKT.

Belongs to the RecF family.

It is found in the cytoplasm. Its function is as follows. The RecF protein is involved in DNA metabolism; it is required for DNA replication and normal SOS inducibility. RecF binds preferentially to single-stranded, linear DNA. It also seems to bind ATP. The chain is DNA replication and repair protein RecF from Lactobacillus gasseri (strain ATCC 33323 / DSM 20243 / BCRC 14619 / CIP 102991 / JCM 1131 / KCTC 3163 / NCIMB 11718 / NCTC 13722 / AM63).